The following is a 127-amino-acid chain: Large ribosomal subunit protein bL17 (127 aa).

It belongs to the bacterial ribosomal protein bL17 family. As to quaternary structure, part of the 50S ribosomal subunit. Contacts protein L32.

The polypeptide is Large ribosomal subunit protein bL17 (Actinobacillus pleuropneumoniae serotype 7 (strain AP76)).